The sequence spans 693 residues: Glycine--tRNA ligase beta subunit (693 aa).

This sequence belongs to the class-II aminoacyl-tRNA synthetase family. Tetramer of two alpha and two beta subunits.

The protein resides in the cytoplasm. It carries out the reaction tRNA(Gly) + glycine + ATP = glycyl-tRNA(Gly) + AMP + diphosphate. This is Glycine--tRNA ligase beta subunit from Ligilactobacillus salivarius (strain UCC118) (Lactobacillus salivarius).